The chain runs to 30 residues: Cyclotide mela-5 (30 aa).

Residues 1 to 30 (GSAIACGESCFKFKCYTPGCSCSYPICKKD) constitute a cross-link (cyclopeptide (Gly-Asp)). 3 disulfides stabilise this stretch: Cys6/Cys20, Cys10/Cys22, and Cys15/Cys27.

In terms of processing, this is a cyclic peptide. Contains 3 disulfide bonds.

In terms of biological role, probably participates in a plant defense mechanism (Potential). Binds to and induces leakage in phospholipd membranes, particularly ones containing 1-palmitoyl-2-oleophosphatidylethanolamine (POPE). The chain is Cyclotide mela-5 from Melicytus latifolius (Norfolk Island mahoe).